The sequence spans 261 residues: Uridine-cytidine kinase 2-B (261 aa).

29 to 37 (GGTASGKSS) lines the ATP pocket. Positions 86, 114, 119, 168, 178, and 186 each coordinate substrate. An ATP-binding site is contributed by aspartate 215. Residues 238 to 261 (RQNGFQNGHGTPRQRRTSESSRPH) are disordered.

The protein belongs to the uridine kinase family. Homotetramer.

It catalyses the reaction uridine + ATP = UMP + ADP + H(+). The catalysed reaction is cytidine + ATP = CMP + ADP + H(+). It functions in the pathway pyrimidine metabolism; CTP biosynthesis via salvage pathway; CTP from cytidine: step 1/3. Its pathway is pyrimidine metabolism; UMP biosynthesis via salvage pathway; UMP from uridine: step 1/1. Functionally, phosphorylates uridine and cytidine to uridine monophosphate and cytidine monophosphate. Does not phosphorylate deoxyribonucleosides or purine ribonucleosides. Can use ATP or GTP as a phosphate donor. The polypeptide is Uridine-cytidine kinase 2-B (uck2b) (Danio rerio (Zebrafish)).